The chain runs to 207 residues: dTTP/UTP pyrophosphatase (207 aa).

Asp-87 acts as the Proton acceptor in catalysis.

It belongs to the Maf family. YhdE subfamily. A divalent metal cation is required as a cofactor.

Its subcellular location is the cytoplasm. The catalysed reaction is dTTP + H2O = dTMP + diphosphate + H(+). It catalyses the reaction UTP + H2O = UMP + diphosphate + H(+). Its function is as follows. Nucleoside triphosphate pyrophosphatase that hydrolyzes dTTP and UTP. May have a dual role in cell division arrest and in preventing the incorporation of modified nucleotides into cellular nucleic acids. This chain is dTTP/UTP pyrophosphatase, found in Nitrosomonas europaea (strain ATCC 19718 / CIP 103999 / KCTC 2705 / NBRC 14298).